The chain runs to 150 residues: MAGILFEDIFDVKDIDPEGKKFDRVSRLHCESESFKMDLILDVNIQIYPVDLGDKFRLVIASTLYEDGTLDDGEYNPTDDRPSRADQFEYVMYGKVYRIEGDETSTEAATRLSAYVSYGGLLMRLQGDANNLHGFEVDSRVYLLMKKLAF.

Alanine 2 is modified (N-acetylalanine).

This sequence belongs to the eukaryotic RPB8 RNA polymerase subunit family. As to quaternary structure, component of the RNA polymerase I (Pol I), RNA polymerase II (Pol II) and RNA polymerase III (Pol III) complexes consisting of at least 13, 12 and 17 subunits, respectively. Pol I complex consists of a ten-subunit catalytic core composed of POLR1A/RPA1, POLR1B/RPA2, POLR1C/RPAC1, POLR1D/RPAC2, POLR1H/RPA12, POLR2E/RPABC1, POLR2F/RPABC2, POLR2H/RPABC3, POLR2K/RPABC4 and POLR2L/RPABC5; a mobile stalk subunit POLR1F/RPA43 protruding from the core and additional subunits homologous to general transcription factors POLR1E/RPA49 and POLR1G/RPA34. Part of Pol I pre-initiation complex (PIC), in which Pol I core assembles with RRN3 and promoter-bound UTBF and SL1/TIF-IB complex. Pol II complex contains a ten-subunit catalytic core composed of POLR2A/RPB1, POLR2B/RPB2, POLR2C/RPB3, POLR2I/RPB9, POLR2J/RPB11, POLR2E/RPABC1, POLR2F/RPABC2, POLR2H/RPABC3, POLR2K/RPABC4 and POLR2L/RPABC5 and a mobile stalk composed of two subunits POLR2D/RPB4 and POLR2G/RPB7. Part of Pol II(G) complex, in which Pol II core associates with an additional subunit POLR2M; unlike conventional Pol II, Pol II(G) functions as a transcriptional repressor. Part of Pol II pre-initiation complex (PIC), in which Pol II core assembles with Mediator, general transcription factors and other specific initiation factors including GTF2E1, GTF2E2, GTF2F1, GTF2F2, TCEA1, ERCC2, ERCC3, GTF2H2, GTF2H3, GTF2H4, GTF2H5, GTF2A1, GTF2A2, GTF2B and TBP; this large multi-subunit PIC complex mediates DNA unwinding and targets Pol II core to the transcription start site where the first phosphodiester bond forms. Directly interacts with POLR2A. Pol III complex consists of a ten-subunit catalytic core composed of POLR3A/RPC1, POLR3B/RPC2, POLR1C/RPAC1, POLR1D/RPAC2, POLR3K/RPC10, POLR2E/RPABC1, POLR2F/RPABC2, POLR2H/RPABC3, POLR2K/RPABC4 and POLR2L/RPABC5; a mobile stalk composed of two subunits POLR3H/RPC8 and CRCP/RPC9, protruding from the core and functioning primarily in transcription initiation; and additional subunits homologous to general transcription factors of the RNA polymerase II machinery, POLR3C/RPC3-POLR3F/RPC6-POLR3G/RPC7 heterotrimer required for transcription initiation and POLR3D/RPC4-POLR3E/RPC5 heterodimer involved in both transcription initiation and termination.

The protein localises to the nucleus. The protein resides in the nucleolus. Functionally, DNA-dependent RNA polymerase catalyzes the transcription of DNA into RNA using the four ribonucleoside triphosphates as substrates. Common component of RNA polymerases I, II and III which synthesize ribosomal RNA precursors, mRNA precursors and many functional non-coding RNAs, and small RNAs, such as 5S rRNA and tRNAs, respectively. The polypeptide is DNA-directed RNA polymerases I, II, and III subunit RPABC3 (POLR2H) (Bos taurus (Bovine)).